The chain runs to 482 residues: tRNA sulfurtransferase (482 aa).

Positions 61–165 (LAIRDALTRI…DDRLLLIKGR (105 aa)) constitute a THUMP domain. Residues 183-184 (LI), lysine 265, glycine 287, and glutamine 296 contribute to the ATP site. An intrachain disulfide couples cysteine 344 to cysteine 456. The Rhodanese domain maps to 404-482 (FGPNDVILDI…GFENVKVYRP (79 aa)). Cysteine 456 serves as the catalytic Cysteine persulfide intermediate.

The protein belongs to the ThiI family.

It localises to the cytoplasm. The catalysed reaction is [ThiI sulfur-carrier protein]-S-sulfanyl-L-cysteine + a uridine in tRNA + 2 reduced [2Fe-2S]-[ferredoxin] + ATP + H(+) = [ThiI sulfur-carrier protein]-L-cysteine + a 4-thiouridine in tRNA + 2 oxidized [2Fe-2S]-[ferredoxin] + AMP + diphosphate. It catalyses the reaction [ThiS sulfur-carrier protein]-C-terminal Gly-Gly-AMP + S-sulfanyl-L-cysteinyl-[cysteine desulfurase] + AH2 = [ThiS sulfur-carrier protein]-C-terminal-Gly-aminoethanethioate + L-cysteinyl-[cysteine desulfurase] + A + AMP + 2 H(+). Its pathway is cofactor biosynthesis; thiamine diphosphate biosynthesis. Functionally, catalyzes the ATP-dependent transfer of a sulfur to tRNA to produce 4-thiouridine in position 8 of tRNAs, which functions as a near-UV photosensor. Also catalyzes the transfer of sulfur to the sulfur carrier protein ThiS, forming ThiS-thiocarboxylate. This is a step in the synthesis of thiazole, in the thiamine biosynthesis pathway. The sulfur is donated as persulfide by IscS. This chain is tRNA sulfurtransferase, found in Salmonella enteritidis PT4 (strain P125109).